Consider the following 82-residue polypeptide: Small ribosomal subunit protein uS17 (82 aa).

This sequence belongs to the universal ribosomal protein uS17 family. As to quaternary structure, part of the 30S ribosomal subunit.

Its function is as follows. One of the primary rRNA binding proteins, it binds specifically to the 5'-end of 16S ribosomal RNA. The sequence is that of Small ribosomal subunit protein uS17 from Bradyrhizobium diazoefficiens (strain JCM 10833 / BCRC 13528 / IAM 13628 / NBRC 14792 / USDA 110).